A 56-amino-acid chain; its full sequence is uncharacterized protein (56 aa).

This is an uncharacterized protein from Saccharomyces cerevisiae (strain ATCC 204508 / S288c) (Baker's yeast).